The following is a 978-amino-acid chain: Copper-transporting ATPase HMA4 (978 aa).

Residues 1–11 (MEQNGENHLKD) are compositionally biased toward basic and acidic residues. Residues 1 to 35 (MEQNGENHLKDPLLQADGGGSGASPAGASPRKERK) are disordered. HMA domains are found at residues 37–103 (RKVM…FEVD), 111–177 (AVCR…FGAD), and 186–252 (NKVH…QPPK). Residues Cys48, Cys51, Cys122, and Cys125 each contribute to the Cu(+) site. Transmembrane regions (helical) follow at residues 280–300 (FLWS…LPMI), 315–335 (MTIG…IIGW), 352–372 (MDVL…YIVL), 385–405 (FFET…LEVV), 545–565 (FFVP…FVAG), 584–604 (LALQ…LGLA), 907–927 (VWAL…LFPF), and 935–955 (WLAG…SLLL).

This sequence belongs to the cation transport ATPase (P-type) (TC 3.A.3) family. Type IB subfamily. In terms of tissue distribution, highly expressed in roots. Expressed in vascular tissues of the stele, mainly in pericycle cells.

Its subcellular location is the vacuole membrane. The enzyme catalyses Cu(+)(in) + ATP + H2O = Cu(+)(out) + ADP + phosphate + H(+). Copper (Cu) transporter that mediates Cu transport in root vacuoles. Involved in Cu detoxification by sequestrating Cu into root vacuoles and limiting translocation of Cu from the roots to the shoots, and accumulation in grains. The sequence is that of Copper-transporting ATPase HMA4 from Oryza sativa subsp. japonica (Rice).